The following is a 988-amino-acid chain: UvrABC system protein A (988 aa).

An ATP-binding site is contributed by 33 to 40 (GLSGSGKS). The segment at 255–282 (CPVCDYSLPELEPRLFSFNAPVGACPSC) adopts a C4-type zinc-finger fold. 2 ABC transporter domains span residues 312–589 (WDRR…PRSL) and 609–938 (PNPK…QFLA). Residue 642 to 649 (GVSGSGKS) participates in ATP binding. The C4-type zinc-finger motif lies at 741–767 (CEACQGDGMIKVEMHFLPDVYVPCDVC). Positions 948 to 988 (ETRPAAMANKPDARPPRKVKPEKVAKATKTATKKTAKKKAS) are disordered. The segment covering 958–972 (PDARPPRKVKPEKVA) has biased composition (basic and acidic residues). Over residues 978-988 (ATKKTAKKKAS) the composition is skewed to basic residues.

This sequence belongs to the ABC transporter superfamily. UvrA family. Forms a heterotetramer with UvrB during the search for lesions.

It localises to the cytoplasm. In terms of biological role, the UvrABC repair system catalyzes the recognition and processing of DNA lesions. UvrA is an ATPase and a DNA-binding protein. A damage recognition complex composed of 2 UvrA and 2 UvrB subunits scans DNA for abnormalities. When the presence of a lesion has been verified by UvrB, the UvrA molecules dissociate. The protein is UvrABC system protein A of Xanthomonas campestris pv. campestris (strain ATCC 33913 / DSM 3586 / NCPPB 528 / LMG 568 / P 25).